The primary structure comprises 26 residues: Hainantoxin F1-31.97 (26 aa).

Cystine bridges form between C2-C16 and C9-C21.

This sequence belongs to the neurotoxin 10 (Hwtx-1) family. 17 (Hntx-9) subfamily. As to expression, expressed by the venom gland.

The protein localises to the secreted. Functionally, ion channel inhibitor. The chain is Hainantoxin F1-31.97 from Cyriopagopus hainanus (Chinese bird spider).